We begin with the raw amino-acid sequence, 100 residues long: Replication restart protein PriB (100 aa).

The 100-residue stretch at 1-100 (MTNRMELSGT…VLHADNITQI (100 aa)) folds into the SSB domain.

It belongs to the PriB family. As to quaternary structure, homodimer. Interacts with PriA and DnaT. Component of the replication restart primosome. Primosome assembly occurs via a 'hand-off' mechanism. PriA binds to replication forks, subsequently PriB then DnaT bind; DnaT then displaces ssDNA to generate the helicase loading substrate.

In terms of biological role, involved in the restart of stalled replication forks, which reloads the replicative helicase on sites other than the origin of replication; the PriA-PriB pathway is the major replication restart pathway. During primosome assembly it facilitates complex formation between PriA and DnaT on DNA; stabilizes PriA on DNA. Stimulates the DNA unwinding activity of PriA helicase. The sequence is that of Replication restart protein PriB from Vibrio parahaemolyticus serotype O3:K6 (strain RIMD 2210633).